A 332-amino-acid chain; its full sequence is Packaging enzyme P4 (332 aa).

The involved in the regulation and mechanisms of transcription, replication and genome packaging stretch occupies residues 111 to 138 (RWPSEGIYSGVTALMGATGSGKSITLNE). Residue 126–133 (GATGSGKS) coordinates ATP. Residues 310–332 (LERGSVDTDDRNSAPRRGANFSL) are disordered. Over residues 313-322 (GSVDTDDRNS) the composition is skewed to basic and acidic residues.

As to quaternary structure, homohexamer. Part of the packaging complex composed of RDRP, P4 and P7.

The protein localises to the virion. The enzyme catalyses a ribonucleoside 5'-triphosphate + H2O = a ribonucleoside 5'-diphosphate + phosphate + H(+). Functionally, packaging motor with helicase and translocase activities. Part of the packaging complex that packages the viral RNA segments, replicate them into a double-stranded form and transcribe them. is one of the structural proteins of the polyhedral procapsid, which is responsible for genomic replication and transcription. Displays single-stranded RNA-stimulated NTPase activity. This is Packaging enzyme P4 (P4) from Pseudomonas savastanoi pv. phaseolicola (Pseudomonas syringae pv. phaseolicola).